Reading from the N-terminus, the 214-residue chain is Probable GTP-binding protein EngB (214 aa).

Residues 24-199 form the EngB-type G domain; sequence GGYEVAFAGR…RGIVGGWLGL (176 aa). GTP contacts are provided by residues 32-39, 59-63, 77-80, 144-147, and 178-180; these read GRSNAGKS, GRTQQ, DLPG, TKAD, and YSG. 2 residues coordinate Mg(2+): Ser-39 and Thr-61.

The protein belongs to the TRAFAC class TrmE-Era-EngA-EngB-Septin-like GTPase superfamily. EngB GTPase family. Mg(2+) is required as a cofactor.

Necessary for normal cell division and for the maintenance of normal septation. In Xanthomonas axonopodis pv. citri (strain 306), this protein is Probable GTP-binding protein EngB.